Here is a 413-residue protein sequence, read N- to C-terminus: Type IV pilus assembly protein TapC (413 aa).

Transmembrane regions (helical) follow at residues 180 to 200 (YPAM…LFVI), 227 to 247 (FMQH…FLYV), 286 to 306 (LSTT…AAGA), and 386 to 406 (IMVV…LPIF).

The protein belongs to the GSP F family.

The protein localises to the cell inner membrane. Its function is as follows. Involved in the translocation of the type IV pilin. In Aeromonas hydrophila, this protein is Type IV pilus assembly protein TapC (tapC).